The primary structure comprises 357 residues: Dihydroorotate dehydrogenase (quinone) (357 aa).

FMN is bound by residues 61-65 (AGFDK) and T85. K65 is a substrate binding site. 110 to 114 (NRFGF) serves as a coordination point for substrate. FMN-binding residues include N141 and N172. N172 lines the substrate pocket. Residue S175 is the Nucleophile of the active site. N177 contributes to the substrate binding site. Positions 217 and 245 each coordinate FMN. Substrate is bound at residue 246–247 (NT). FMN is bound by residues G268, G297, and 318–319 (YS).

It belongs to the dihydroorotate dehydrogenase family. Type 2 subfamily. Monomer. FMN is required as a cofactor.

The protein localises to the cell membrane. It catalyses the reaction (S)-dihydroorotate + a quinone = orotate + a quinol. It participates in pyrimidine metabolism; UMP biosynthesis via de novo pathway; orotate from (S)-dihydroorotate (quinone route): step 1/1. Catalyzes the conversion of dihydroorotate to orotate with quinone as electron acceptor. This Xanthobacter autotrophicus (strain ATCC BAA-1158 / Py2) protein is Dihydroorotate dehydrogenase (quinone).